The chain runs to 215 residues: 3-isopropylmalate dehydratase small subunit (215 aa).

This sequence belongs to the LeuD family. LeuD type 1 subfamily. Heterodimer of LeuC and LeuD.

The catalysed reaction is (2R,3S)-3-isopropylmalate = (2S)-2-isopropylmalate. It functions in the pathway amino-acid biosynthesis; L-leucine biosynthesis; L-leucine from 3-methyl-2-oxobutanoate: step 2/4. Its function is as follows. Catalyzes the isomerization between 2-isopropylmalate and 3-isopropylmalate, via the formation of 2-isopropylmaleate. In Marinobacter nauticus (strain ATCC 700491 / DSM 11845 / VT8) (Marinobacter aquaeolei), this protein is 3-isopropylmalate dehydratase small subunit.